A 1170-amino-acid chain; its full sequence is MGRSYNEKDFEYHRHTFHHTHHPLSTHLPPQRFRKRVLSMDRRRKRKRKKKKTSMPPSDVTPTIHEVDEEEAESEIEGQCQAATPTEPSEELPQLSLGSEEDLAADLPLSSFHMESERPASSEETLPSPASMEEKEETQQPPDGGEHKDISNSFSPSPEAASMTTRGWFRRKPVHRLAGAQRTSYDLRERICIGSMTAMETAVYQKVPTDEAEAQMLASADLDDMKSHRFEDNPGVRRHLVKKSSRCQLPRSSNGSPPLSSLKRRKRMDKKTHEVFVELNELIVDKNQEMRWKERARWIKFEEDVEEETDRWGKPHVASLSFRSLLELRRTITHGAIMLDLDQSTLPGIAHLMVETMIISDQIRAEDRANVLRALLLKHSHPNDEKEGLFHRNHSVTSLGSFRHNHNHVHDTSLPLVSQDHEEMHDSKAAEHDKEKSLHPIPAEGHAASRSLKLLAKIPKDAEATVVLVGCVEFLEKPAMAFVRLNESILLESILEVPVPIRFIFVLLGPTQTNVDYHEIGRSFSTLMSDKNFHEVAYFADDRQDLLNGINEFLDCSIVIPPSDVEGKDLLKTVASFQKQMLRKRKERELKKCASTVTGAELETKDVNIEEQEEEDQFDVDPLKRSGIPFGGLIHDIRRRYPRYISDLKDALDTQCIAAVIFIYFAALSPTITFGGLLGEKTQGMMGVSELIISTATVGVLFSLLAGQPLLIIGFSGPLLVFEEAFYKFCQAQGFEYLTGRVWIGFWLIFIVLVIVAAEGSFLVRYISPFTQEIFAFLISLIFIYETFSKLIKVFQEHPLMMSYTSAAFKHSDQRGSSVIGEPILNQPNTALLSMVLMMGTFFTAFFLRKLRNSRFLGGKVRRVIGDFGIPISILISVLVDILIPDTYTQKLNVPSGFSVTSPDKRGWFISPFGDKQPFPVWMMGASVIPALLVFILIFMETQITTLIVSKKERRLMKGSGFHLDLLLIVTLGAICPLFGLPWLTAATVRSVTHVNALTVMSKATAPGEKPMIQEVKEQRVTGMCVAILVGLSIVMTDVLRHIPLAVLFGIFLYMGITSLTGIQLYERITLMVTPAKHHPDHVYVTKVKTWRMNMFTVIQLLCIVLLWVVKSTVASLAFPFILIMTVPLRRLILTRIFEERELAALDADEDSPNFDEDGRDEYNEIHMLV.

Over 1–656 (MGRSYNEKDF…DLKDALDTQC (656 aa)) the chain is Cytoplasmic. 3 disordered regions span residues 17–96 (FHHT…PQLS), 112–167 (FHME…TTRG), and 239–267 (HLVK…RRKR). A compositionally biased stretch (basic residues) spans 32–53 (RFRKRVLSMDRRRKRKRKKKKT). Positions 67-76 (VDEEEAESEI) are enriched in acidic residues. The span at 246-259 (RCQLPRSSNGSPPL) shows a compositional bias: polar residues. 5 consecutive transmembrane segments (helical) span residues 657 to 677 (IAAV…FGGL), 702 to 722 (FSLL…LLVF), 744 to 764 (IGFW…SFLV), 774 to 794 (IFAF…LIKV), and 828 to 848 (PNTA…AFFL). The tract at residues 657–1170 (IAAVIFIYFA…DEYNEIHMLV (514 aa)) is membrane (anion exchange). Residues 849–863 (RKLRNSRFLGGKVRR) lie on the Cytoplasmic side of the membrane. Helical transmembrane passes span 864–884 (VIGD…DILI), 919–939 (FPVW…ILIF), 966–986 (LLLI…WLTA), 1020–1063 (RVTG…LTGI), and 1104–1124 (IVLL…FILI).

This sequence belongs to the anion exchanger (TC 2.A.31) family. As to expression, widely expressed at low levels.

The protein localises to the cell membrane. The catalysed reaction is hydrogencarbonate(in) + chloride(out) = hydrogencarbonate(out) + chloride(in). Functionally, sodium-independent anion exchanger which mediates the electroneutral exchange of chloride for bicarbonate ions across the cell membrane. May be involved in the regulation of intracellular pH, and the modulation of cardiac action potential. In Danio rerio (Zebrafish), this protein is Anion exchange protein 3.